A 629-amino-acid polypeptide reads, in one-letter code: Methyl-accepting chemotaxis protein PctB (629 aa).

Topologically, residues 1 to 10 (MIKSLKFSHK) are cytoplasmic. The chain crosses the membrane as a helical span at residues 11 to 31 (ILLAAALVVIATFSLFTLYND). At 32 to 276 (SLQRASIRED…AYAMLTKLRT (245 aa)) the chain is on the periplasmic side. The region spanning 37 to 260 (SIREDLEDYL…LSGLDWYIGI (224 aa)) is the Cache domain. L-arginine-binding positions include Tyr-109, Ser-115, Tyr-121, 126–128 (RPW), Glu-146, and Asp-173. Residues Ser-115, Tyr-121, 126 to 128 (RPW), 144 to 146 (YME), and Asp-173 each bind L-glutamine. A helical transmembrane segment spans residues 277–297 (SAIVAALIAVVAIVLLLGMLI). An HAMP domain is found at 298 to 352 (RVLMQPLTDMGRAMQDIAQGEGDLTKRLKVTSNDEFGALAISFNRFVERIHESIR). Topologically, residues 298–629 (RVLMQPLTDM…LRQLVDSFKI (332 aa)) are cytoplasmic. The 237-residue stretch at 357 to 593 (TARQLHDVAQ…SLNMDITEIN (237 aa)) folds into the Methyl-accepting transducer domain. The tract at residues 405–424 (RNAADASHHASDANHQAEDG) is disordered. The segment covering 410–424 (ASHHASDANHQAEDG) has biased composition (basic and acidic residues).

Belongs to the methyl-accepting chemotaxis (MCP) protein family. In terms of assembly, monomer in the absence and presence of ligands.

It localises to the cell inner membrane. Its function is as follows. Chemotactic-signal transducers respond to changes in the concentration of attractants and repellents in the environment, transduce a signal from the outside to the inside of the cell, and facilitate sensory adaptation through the variation of the level of methylation. Responds to L-Arg, L-Gln, L-Ala, L-Glu, L-Lys, L-Met and L-Tyr. Also involved in repellent responses to trichloroethylene (TCE), chloroform and methylthiocyanate. The chain is Methyl-accepting chemotaxis protein PctB (pctB) from Pseudomonas aeruginosa (strain ATCC 15692 / DSM 22644 / CIP 104116 / JCM 14847 / LMG 12228 / 1C / PRS 101 / PAO1).